Consider the following 457-residue polypeptide: Na(+)/H(+) antiporter NhaA (457 aa).

Helical transmembrane passes span 33–53, 76–96, 114–134, 142–162, 172–192, 196–216, 235–255, 308–328, 349–369, 385–405, and 419–439; these read ASGI…NSPL, FSLA…VVGM, LLPL…FLAF, AGWG…LTLL, VFVT…IALF, GLQL…ALMS, YALH…GLAI, FVHA…ALAN, TALA…WIAV, LIGV…IAGL, and VGIL…LRLT.

It belongs to the NhaA Na(+)/H(+) (TC 2.A.33) antiporter family.

Its subcellular location is the cell inner membrane. The catalysed reaction is Na(+)(in) + 2 H(+)(out) = Na(+)(out) + 2 H(+)(in). Na(+)/H(+) antiporter that extrudes sodium in exchange for external protons. In Anaeromyxobacter sp. (strain Fw109-5), this protein is Na(+)/H(+) antiporter NhaA.